We begin with the raw amino-acid sequence, 544 residues long: MKDSMSILTQTPSEPNAAHPQLHHHLSTLQQQHHQHHLHYGLQPPAVAHSIHSTTTMSSGGSTTTASGIGKPNRSRFMINDILAGSAAAAFYKQQQHHQQLHHHNNNNNSGSSGGSSPAHSNNNNNINGDNCEASNVAGVGVLPSALHHPQPHPPTHPHTHPHALMHPHGKLGHFPPTAGGNGLNVAQYAAAMQQHYAAAAAAAAARNNAAAAAAAAAAAAAAGVAAPPVDGGVDGGVGLAPPAGGDLDDSSDYHEENEDCDSGNMDDHSVCSNGGKDDDGNSVKSGSTSDMSGLSKKQRKARTAFTDHQLQTLEKSFERQKYLSVQERQELAHKLDLSDCQVKTWYQNRRTKWKRQTAVGLELLAEAGNFAAFQRLYGGSPYLGAWPYAAAAGAAHGATPHTNIDIYYRQAAAAAAMQKPLPYNLYAGVPSVGVGVGVGVGPAPFSHLSASSSLSSLSSYYQSAAAAASAANPGGPHPVAPPPSVGGGSPPSGLVKPIPAHSASASPPPRPPSTPSPTLNPGSPPGRSVDSCSQSDDEDQIQV.

Residues 53–70 (STTTMSSGGSTTTASGIG) are compositionally biased toward low complexity. Disordered stretches follow at residues 53–73 (STTT…GKPN), 92–179 (YKQQ…PPTA), 236–308 (GGVG…AFTD), and 471–544 (AANP…QIQV). Residues 95 to 105 (QQHHQQLHHHN) are compositionally biased toward basic residues. The span at 106–131 (NNNNSGSSGGSSPAHSNNNNNINGDN) shows a compositional bias: low complexity. Over residues 156–172 (THPHTHPHALMHPHGKL) the composition is skewed to basic residues. Positions 247–262 (DLDDSSDYHEENEDCD) are enriched in acidic residues. The span at 266–282 (MDDHSVCSNGGKDDDGN) shows a compositional bias: basic and acidic residues. The segment covering 283-293 (SVKSGSTSDMS) has biased composition (polar residues). The homeobox DNA-binding region spans 299–358 (QRKARTAFTDHQLQTLEKSFERQKYLSVQERQELAHKLDLSDCQVKTWYQNRRTKWKRQT). The segment covering 476-485 (GPHPVAPPPS) has biased composition (pro residues). The segment covering 492–506 (PSGLVKPIPAHSASA) has biased composition (low complexity). A compositionally biased stretch (pro residues) spans 507–516 (SPPPRPPSTP).

Belongs to the Antp homeobox family. In terms of tissue distribution, B-H1 and B-H2 are abundant in the eye-antenna imaginal disk. Expressed in R1 and R6 cells throughout larval stage until 30 hours after puparium formation, at which time expression is seen in the anterior and posterior primary pigment cells. Coexpressed in embryonic glial cells, neurons of the CNS and PNS, most latitudinal anterior cells of the developing notum and the central circular region of the leg and antennal imaginal disk throughout larval development.

Its subcellular location is the nucleus. Functionally, B-H1 and B-H2 are regulated by members of the wg signaling pathway; wg and dpp. B-H1 and B-H2 are coexpressed and functionally required in R1 and R6 receptor cells and primary pigment cells for normal eye development. Coexpression is also required for the fate determination of external sensory organs, formation of notal microchaetae, formation of presutural macrochaetae, antennal development and for distal leg morphogenesis; segmentation and specification of tarsal segments 3-5. This is Homeobox protein B-H1 (B-H1) from Drosophila melanogaster (Fruit fly).